Here is a 245-residue protein sequence, read N- to C-terminus: Uridylate kinase (245 aa).

18–21 contacts ATP; it reads KLSG. G60 provides a ligand contact to UMP. ATP is bound by residues G61 and R65. UMP-binding positions include D80 and 141-148; that span reads TGNPFFTT. Positions 168, 174, and 177 each coordinate ATP.

The protein belongs to the UMP kinase family. As to quaternary structure, homohexamer.

Its subcellular location is the cytoplasm. The catalysed reaction is UMP + ATP = UDP + ADP. The protein operates within pyrimidine metabolism; CTP biosynthesis via de novo pathway; UDP from UMP (UMPK route): step 1/1. Inhibited by UTP. Its function is as follows. Catalyzes the reversible phosphorylation of UMP to UDP. The chain is Uridylate kinase from Pseudomonas aeruginosa (strain UCBPP-PA14).